The primary structure comprises 465 residues: Argininosuccinate lyase (465 aa).

This sequence belongs to the lyase 1 family. Argininosuccinate lyase subfamily.

Its subcellular location is the cytoplasm. It catalyses the reaction 2-(N(omega)-L-arginino)succinate = fumarate + L-arginine. It functions in the pathway amino-acid biosynthesis; L-arginine biosynthesis; L-arginine from L-ornithine and carbamoyl phosphate: step 3/3. The polypeptide is Argininosuccinate lyase (Bradyrhizobium diazoefficiens (strain JCM 10833 / BCRC 13528 / IAM 13628 / NBRC 14792 / USDA 110)).